Reading from the N-terminus, the 301-residue chain is Glycine--tRNA ligase alpha subunit (301 aa).

This sequence belongs to the class-II aminoacyl-tRNA synthetase family. Tetramer of two alpha and two beta subunits.

It is found in the cytoplasm. It carries out the reaction tRNA(Gly) + glycine + ATP = glycyl-tRNA(Gly) + AMP + diphosphate. In Alteromonas mediterranea (strain DSM 17117 / CIP 110805 / LMG 28347 / Deep ecotype), this protein is Glycine--tRNA ligase alpha subunit.